Consider the following 291-residue polypeptide: uncharacterized protein (291 aa).

The protein belongs to the PhyH family.

This is an uncharacterized protein from Mycobacterium bovis (strain ATCC BAA-935 / AF2122/97).